Here is a 60-residue protein sequence, read N- to C-terminus: Potassium channel toxin alpha-KTx 29.2 (60 aa).

The N-terminal stretch at 1 to 28 is a signal peptide; that stretch reads MKSVCGVLIILVVLTTMLSISTFSTVGA. 3 disulfide bridges follow: Cys-32-Cys-51, Cys-40-Cys-56, and Cys-44-Cys-58.

This sequence belongs to the short scorpion toxin superfamily. Potassium channel inhibitor family. Alpha-KTx 29 subfamily. In terms of tissue distribution, expressed by the venom gland.

The protein localises to the secreted. Weakly inhibits the Kv1.3/KCNA3 channel (1 uM of thetoxin inhibits currents by 13.2%) and Kv7.1/KCNQ1 channel (10 uM of the toxin inhibits currents by 27.7%). In Lychas mucronatus (Chinese swimming scorpion), this protein is Potassium channel toxin alpha-KTx 29.2.